Consider the following 341-residue polypeptide: Fructose-1,6-bisphosphatase, cytosolic (341 aa).

Mg(2+) contacts are provided by Glu-71, Glu-100, Asp-121, Leu-123, and Asp-124. Substrate-binding positions include 124–127, Asn-215, Tyr-247, Tyr-267, and Lys-277; that span reads DGSS. Residue Glu-283 coordinates Mg(2+).

The protein belongs to the FBPase class 1 family. Mg(2+) is required as a cofactor.

It localises to the cytoplasm. The enzyme catalyses beta-D-fructose 1,6-bisphosphate + H2O = beta-D-fructose 6-phosphate + phosphate. The chain is Fructose-1,6-bisphosphatase, cytosolic from Spinacia oleracea (Spinach).